The sequence spans 219 residues: Ribose-5-phosphate isomerase A (219 aa).

Substrate-binding positions include 28–31 (SGST), 81–84 (DGAD), and 94–97 (KGGG). Glu-103 serves as the catalytic Proton acceptor. Lys-121 provides a ligand contact to substrate.

Belongs to the ribose 5-phosphate isomerase family. Homodimer.

The enzyme catalyses aldehydo-D-ribose 5-phosphate = D-ribulose 5-phosphate. The protein operates within carbohydrate degradation; pentose phosphate pathway; D-ribose 5-phosphate from D-ribulose 5-phosphate (non-oxidative stage): step 1/1. Catalyzes the reversible conversion of ribose-5-phosphate to ribulose 5-phosphate. This chain is Ribose-5-phosphate isomerase A, found in Actinobacillus pleuropneumoniae serotype 5b (strain L20).